The sequence spans 499 residues: MKDRAADPVTKFSPSPYETGQFLRISERADVGTPQIDYLLATQRPDGLWGSVGFELVPTLGAVAGLSSRPEYADRAGVTDAVARACEKLWELALGEGGLPKLPDTVASEIIVPSLIDLLSEVLQRHRPAVGGKAGQEQEFPSPPGANAELWRQLSDRIARGQAIPKTAWHTLEAFHPLPKQFAATVTPAADGAVTCSPSSTAAWLSAVGTDAGASTRAYLDEAQSRYGGAIPMGSSMPYFEVLWVLNLVLKYFPDVPIPREIIEEIAAGFSDSGIGGGPGLPPDGDDTAYANLAGDKLGAPTHPEILMKFWAEDHFVSYPGEQTPSETVNAHALEYLNHLRMRRGITEFGAVEDACAEWVISQQTEDGCWYDKWNVSPYYSTAACVEALLDARKQDEPQLDSLRRAREWLLRHQTDSGGWGMAEPSPEETAYAVLALDLFASRGGEGAEECAAAISRAKEFFTDESRENPPLWMGKDLYTPFRIVDVTVMCGRAVVGRY.

Residues D284 and D286 each coordinate Mg(2+). Positions 284 to 287 match the DXDD motif motif; it reads DGDD.

Belongs to the terpene synthase family. Monomer. It depends on Mg(2+) as a cofactor.

The enzyme catalyses (2E,6E,10E)-geranylgeranyl diphosphate = terpentedienyl diphosphate. It functions in the pathway antibiotic biosynthesis. Involved in the production of the isoprenoid antibiotic terpentecin. Converts geranylgeranyl diphosphate (GGDP) into terpentedienol diphosphate (TDP) by a protonation-initiated cyclization. The polypeptide is Terpentedienyl-diphosphate synthase (cyc1) (Kitasatospora griseola (Streptomyces griseolosporeus)).